Reading from the N-terminus, the 173-residue chain is MIRYIKGDLLGHLPPSKSSVAVFAHACNCQGVWGGGIAAVLRVKFPSTYPLYSGHCQEKGCDPHRLLGTSVVVPSQASDPGNIAGYPPKYIACLFTSDFAQTQEEIVAYTDSAIEALVDQLKELQKTTAIETGQSGKIVVNMPKINAGIFAVPWEKTEAVLKKYDVEFNVYVI.

The 173-residue stretch at 1–173 folds into the Macro domain; that stretch reads MIRYIKGDLL…YDVEFNVYVI (173 aa). Substrate-binding positions include 7 to 9, 26 to 28, 33 to 38, and 145 to 151; these read GDL, ACN, WGGGIA, and INAGIFA.

Belongs to the POA1 family.

The enzyme catalyses ADP-alpha-D-ribose 1''-phosphate + H2O = ADP-D-ribose + phosphate. Its function is as follows. Highly specific phosphatase involved in the metabolism of ADP-ribose 1''-phosphate (Appr1p) which is produced as a consequence of tRNA splicing. The chain is ADP-ribose 1''-phosphate phosphatase (POA1) from Scheffersomyces stipitis (strain ATCC 58785 / CBS 6054 / NBRC 10063 / NRRL Y-11545) (Yeast).